The following is a 65-amino-acid chain: Disintegrin CC8B (65 aa).

The Disintegrin domain occupies 1–65 (NSAHPCCDPV…DCPRNPWHKS (65 aa)). Cystine bridges form between cysteine 6–cysteine 29, cysteine 20–cysteine 26, cysteine 25–cysteine 50, and cysteine 38–cysteine 57. The short motif at 42-44 (WGD) is the Cell attachment site; atypical (WGD) element.

The protein belongs to the disintegrin family. Dimeric disintegrin subfamily. Heterodimer with CC8A; disulfide-linked. As to expression, expressed by the venom gland.

Its subcellular location is the secreted. Its function is as follows. Inhibits integrins alpha-IIb/beta-3 (ITGA2B/ITGB3), alpha-V/beta-3 (ITGAV/ITGB3), and alpha-5/beta-1 (ITGA5/ITGB1). This chain is Disintegrin CC8B, found in Cerastes cerastes (Horned desert viper).